A 1300-amino-acid chain; its full sequence is Phospholipid-transporting ATPase IK (1300 aa).

Over residues methionine 1–serine 11 the composition is skewed to polar residues. The segment at methionine 1–aspartate 98 is disordered. At methionine 1 to leucine 149 the chain is on the cytoplasmic side. Basic residues predominate over residues arginine 65 to alanine 74. A helical transmembrane segment spans residues proline 150–leucine 171. Topologically, residues glutamine 172 to isoleucine 177 are exoplasmic loop. The chain crosses the membrane as a helical span at residues serine 178–alanine 197. Topologically, residues threonine 198–leucine 381 are cytoplasmic. Residues valine 382–serine 403 traverse the membrane as a helical segment. At valine 404–phenylalanine 430 the chain is on the exoplasmic loop side. Residues tryptophan 431–isoleucine 452 traverse the membrane as a helical segment. The Cytoplasmic portion of the chain corresponds to tyrosine 453 to lysine 995. The active-site 4-aspartylphosphate intermediate is the aspartate 495. Residues aspartate 495, lysine 496, threonine 497, glutamate 596, phenylalanine 637, lysine 660, arginine 693, threonine 763, glycine 764, aspartate 765, arginine 913, and lysine 919 each contribute to the ATP site. Position 495 (aspartate 495) interacts with Mg(2+). Threonine 497 contacts Mg(2+). Aspartate 939 contacts Mg(2+). Residues asparagine 942 and aspartate 943 each coordinate ATP. Aspartate 943 serves as a coordination point for Mg(2+). A helical membrane pass occupies residues phenylalanine 996–cysteine 1016. Over tyrosine 1017–glycine 1028 the chain is Exoplasmic loop. The helical transmembrane segment at tryptophan 1029–leucine 1048 threads the bilayer. Residues phenylalanine 1049 to valine 1078 are Cytoplasmic-facing. The chain crosses the membrane as a helical span at residues phenylalanine 1079–isoleucine 1100. The Exoplasmic loop portion of the chain corresponds to serine 1101–aspartate 1112. A helical membrane pass occupies residues histidine 1113–isoleucine 1135. The Cytoplasmic portion of the chain corresponds to isoleucine 1136–alanine 1141. Residues leucine 1142–glutamine 1162 form a helical membrane-spanning segment. Topologically, residues serine 1163 to serine 1182 are exoplasmic loop. The chain crosses the membrane as a helical span at residues valine 1183 to leucine 1207. Residues arginine 1208–glutamine 1300 are Cytoplasmic-facing. The disordered stretch occupies residues arginine 1272 to glutamine 1300.

This sequence belongs to the cation transport ATPase (P-type) (TC 3.A.3) family. Type IV subfamily. Requires Mg(2+) as cofactor. In terms of tissue distribution, isoform 3 was only detected in testis.

It localises to the cytoplasmic vesicle. It is found in the secretory vesicle. The protein resides in the acrosome membrane. Its subcellular location is the endoplasmic reticulum membrane. It carries out the reaction ATP + H2O + phospholipidSide 1 = ADP + phosphate + phospholipidSide 2.. The enzyme catalyses a 1,2-diacyl-sn-glycero-3-phospho-L-serine(out) + ATP + H2O = a 1,2-diacyl-sn-glycero-3-phospho-L-serine(in) + ADP + phosphate + H(+). P4-ATPase flippase which catalyzes the hydrolysis of ATP coupled to the transport of aminophospholipids from the outer to the inner leaflet of various membranes and ensures the maintenance of asymmetric distribution of phospholipids. Phospholipid translocation also seems to be implicated in vesicle formation and in uptake of lipid signaling molecules. May be responsible for the maintenance of asymmetric distribution of phosphatidylserine (PS) in spermatozoa membranes. Involved in acrosome reactions and binding of spermatozoa to zona pellucida. The protein is Phospholipid-transporting ATPase IK of Homo sapiens (Human).